A 433-amino-acid polypeptide reads, in one-letter code: Putative purine permease YbbY (433 aa).

Topologically, residues 1-17 are periplasmic; that stretch reads MFNFAVSRESLLSGFQW. Residues 18-38 traverse the membrane as a helical segment; that stretch reads FFFIFCNTVVVPPTLLSAFQL. Topologically, residues 39–42 are cytoplasmic; the sequence is PQSS. A helical membrane pass occupies residues 43–63; the sequence is LLTLTQYAFLATALACFAQAF. Topologically, residues 64-68 are periplasmic; that stretch reads CGHRR. Residues 69-89 traverse the membrane as a helical segment; it reads AIMEGPGGLWWGTILTITLGE. The Cytoplasmic portion of the chain corresponds to 90 to 102; that stretch reads ASRGTPINDIATS. The chain crosses the membrane as a helical span at residues 103–123; sequence LAVGIALSGVLTMLIGFSGLG. At 124 to 130 the chain is on the periplasmic side; the sequence is HRLARLF. The helical transmembrane segment at 131 to 151 threads the bilayer; the sequence is TPSVMVLFMLMLGAQLTTIFF. Topologically, residues 152-169 are cytoplasmic; it reads KGMLGLPFGIADPNFKIQ. A helical transmembrane segment spans residues 170 to 190; that stretch reads LPPFALSVAVMCLVLAMIIFL. Residues 191 to 196 lie on the Periplasmic side of the membrane; that stretch reads PQRFAR. A helical membrane pass occupies residues 197–217; sequence YGLLVGTITGWLLWYFCFPSS. The Cytoplasmic portion of the chain corresponds to 218-230; sequence HSLSGELHWQWFP. The helical transmembrane segment at 231–251 threads the bilayer; sequence LGSGGALSPGIILTAVITGLV. Over 252 to 288 the chain is Periplasmic; sequence NISNTYGAIRGTDVFYPQQGAGNTRYRRSFVATGFMT. A helical membrane pass occupies residues 289–309; sequence LITVPLAVIPFSPFVSSIGLL. At 310-319 the chain is on the cytoplasmic side; the sequence is TQTGDYTRRS. Residues 320-340 form a helical membrane-spanning segment; that stretch reads FIYGSVICLLVALVPALTRLF. Residues 341-345 are Periplasmic-facing; the sequence is CSIPL. The chain crosses the membrane as a helical span at residues 346–366; the sequence is PVSSAVMLVSYLPLLFSALVF. Over 367-379 the chain is Cytoplasmic; it reads SQQITFTARNIYR. The chain crosses the membrane as a helical span at residues 380 to 400; the sequence is LALPLFVGIFLMALPPVYLQD. Topologically, residues 401–407 are periplasmic; sequence LPLTLRP. Residues 408–428 form a helical membrane-spanning segment; the sequence is LLSNGLLVGILLAVLMDNLIP. Residues 429–433 lie on the Cytoplasmic side of the membrane; the sequence is WERIE.

This sequence belongs to the nucleobase:cation symporter-2 (NCS2) (TC 2.A.40) family.

The protein resides in the cell inner membrane. This chain is Putative purine permease YbbY (ybbY), found in Escherichia coli (strain K12).